The chain runs to 849 residues: Thrombospondin type-1 domain-containing protein 1 (849 aa).

A signal peptide spans 1 to 24 (MKQTLKDFSNLLLVVLCDYVLGEA). At 25–413 (EHLVLGEPGH…QPQAPVKSNN (389 aa)) the chain is on the extracellular side. Asn39, Asn50, Asn55, Asn66, Asn77, Asn106, and Asn303 each carry an N-linked (GlcNAc...) asparagine glycan. Positions 340 to 393 (IETWGLWQPWSQCSASCGDGVRERRRVCLTSSPSRPGCPGMSSETSPCSLEDCA) constitute a TSP type-1 domain. 3 disulfide bridges follow: Cys352–Cys387, Cys356–Cys392, and Cys367–Cys377. Residues 414 to 434 (VVTVTGISLCLFIIVATVLIT) traverse the membrane as a helical segment. Topologically, residues 435–849 (LWRKLGRAPK…STLSVEKLVI (415 aa)) are cytoplasmic. Ser463 bears the Phosphoserine mark. 3 disordered regions span residues 472-516 (SEPR…SESF), 595-799 (KSPF…KCQS), and 828-849 (GYFG…KLVI). A compositionally biased stretch (low complexity) spans 479–493 (SDAGDGPAGSPGDPG). Positions 636–651 (SQVRSHSRGSHFRRTA) are enriched in basic residues. Residues 652–666 (SFHEARQARPFRERS) are compositionally biased toward basic and acidic residues. Pro residues predominate over residues 720–732 (SPLPKPHSLGPPP).

Part of a complex composed of THSD1, PTK2/FAK1, TLN1 and VCL. Interacts with TLN1.

It localises to the endosome membrane. The protein localises to the cell junction. Its subcellular location is the focal adhesion. Is a positive regulator of nascent focal adhesion assembly, involved in the modulation of endothelial cell attachment to the extracellular matrix. This Bos taurus (Bovine) protein is Thrombospondin type-1 domain-containing protein 1 (THSD1).